A 73-amino-acid chain; its full sequence is Protein WFDC10B (73 aa).

The signal sequence occupies residues 1-21 (MAPQTLLLVLVLCVLLLQAQG). Residues 28–73 (RMQRIKVCEKRPSIDLCIHHCSYFQKCETNKICCSAFCGNICMSIL) form the WAP domain.

Ubiquitously expressed.

It is found in the secreted. This is Protein WFDC10B (WFDC10B) from Homo sapiens (Human).